Consider the following 252-residue polypeptide: 2-succinyl-6-hydroxy-2,4-cyclohexadiene-1-carboxylate synthase (252 aa).

The protein belongs to the AB hydrolase superfamily. MenH family. As to quaternary structure, monomer.

It carries out the reaction 5-enolpyruvoyl-6-hydroxy-2-succinyl-cyclohex-3-ene-1-carboxylate = (1R,6R)-6-hydroxy-2-succinyl-cyclohexa-2,4-diene-1-carboxylate + pyruvate. It participates in quinol/quinone metabolism; 1,4-dihydroxy-2-naphthoate biosynthesis; 1,4-dihydroxy-2-naphthoate from chorismate: step 3/7. Its pathway is quinol/quinone metabolism; menaquinone biosynthesis. Functionally, catalyzes a proton abstraction reaction that results in 2,5-elimination of pyruvate from 2-succinyl-5-enolpyruvyl-6-hydroxy-3-cyclohexene-1-carboxylate (SEPHCHC) and the formation of 2-succinyl-6-hydroxy-2,4-cyclohexadiene-1-carboxylate (SHCHC). The polypeptide is 2-succinyl-6-hydroxy-2,4-cyclohexadiene-1-carboxylate synthase (Salmonella enteritidis PT4 (strain P125109)).